A 240-amino-acid polypeptide reads, in one-letter code: Rho GDP-dissociation inhibitor 1 (240 aa).

The tract at residues 1 to 66 is disordered; that stretch reads MSLVSGARDM…DDDSKLQLGP (66 aa).

It belongs to the Rho GDI family. Interacts with RAC-like GTP binding proteins ARAC5/ROP4 and ARAC3/ROP6.

Its subcellular location is the cytoplasm. Its function is as follows. Regulates the GDP/GTP exchange reaction of the Rho proteins by inhibiting the dissociation of GDP from them, and the subsequent binding of GTP to them. The sequence is that of Rho GDP-dissociation inhibitor 1 (GDI1) from Arabidopsis thaliana (Mouse-ear cress).